The following is a 408-amino-acid chain: Zinc chaperone AztD (408 aa).

The N-terminal stretch at 1–21 (MLRHLAGASALALTLAGAGFA) is a signal peptide. The N-terminal Zn(2+)-binding motif; binds a third Zn(2+) with low affinity motif lies at 23-29 (DHDHDHE). Zn(2+) contacts are provided by H99, H102, D104, H124, H167, H218, and H408. A disulfide bridge links C214 with C231.

Monomer.

Its subcellular location is the periplasm. Its function is as follows. Acts as a zinc chaperone in the AztABCD zinc transport system. Directly transfers one zinc cation to the solute binding protein AztC; the transfer occurs without the formation of a stable interaction. Binds 3 Zn(2+), two with high affinity and one with low affinity, and transfers only Zn(2+) bound to site 2 to AztC. Likely functions to store zinc in the periplasm and may be important for zinc accumulation in zinc-limited environments. The sequence is that of Zinc chaperone AztD from Paracoccus denitrificans (strain Pd 1222).